Reading from the N-terminus, the 112-residue chain is Putative UPF0320 protein YEL074W (112 aa).

The disordered stretch occupies residues 93–112 (EKSPSKSPKHKNILPFNFTK).

Belongs to the UPF0320 family.

In Saccharomyces cerevisiae (strain ATCC 204508 / S288c) (Baker's yeast), this protein is Putative UPF0320 protein YEL074W.